A 481-amino-acid polypeptide reads, in one-letter code: Solute carrier family 46 member 2 (481 aa).

Residues 1–37 (MGPEAAGPGRGAAPRLQVRTWIEPVVAATQVASSLYE) lie on the Cytoplasmic side of the membrane. A helical transmembrane segment spans residues 38-58 (AGLLLVVKASFGAGAGAGAGA). The Extracellular segment spans residues 59 to 83 (ASNHSAGPPRGAPEDQQQRAISNFY). Residue Asn61 is glycosylated (N-linked (GlcNAc...) asparagine). Residues 84-104 (IVYNLVVGLTPLLSAYALGWL) form a helical membrane-spanning segment. Over 105 to 113 (SDRRHRKVA) the chain is Cytoplasmic. Residues 114–134 (ICVALLGFLLSRVGLLLKVLL) form a helical membrane-spanning segment. Topologically, residues 135-143 (DWPVEVLYG) are extracellular. A helical transmembrane segment spans residues 144–164 (AAALNGLCGGFSAFWAGVMAL). Over 165-179 (GSLGSSEGRRSVRLV) the chain is Cytoplasmic. Residues 180 to 200 (LIDLILGLAGFCGSMASGHLF) form a helical membrane-spanning segment. Residues 201–210 (KQVAGHSGQG) lie on the Extracellular side of the membrane. The helical transmembrane segment at 211 to 231 (LVLTACSVSCATFALLYSLLV) threads the bilayer. The Cytoplasmic segment spans residues 232–286 (LKVPEAAAGSGQALSAGDSVAGTVGTYRTLDPDHSDKQSVQGLHPPSPGKAKPRR). Positions 263–282 (PDHSDKQSVQGLHPPSPGKA) are disordered. The helical transmembrane segment at 287–307 (TIIALLFLGAIVYDLAVVGTV) threads the bilayer. Residues 308–326 (DVMPLFVLREPLSWNQVQV) are Extracellular-facing. The chain crosses the membrane as a helical span at residues 327–347 (GYGMAAGYTIFITSFLGVLVF). Topologically, residues 348-353 (SRCFQD) are cytoplasmic. The helical transmembrane segment at 354–374 (TTMIMIGMVSFGSGALLLAFV) threads the bilayer. Residues 375-376 (KE) lie on the Extracellular side of the membrane. Residues 377–397 (TYMFYIARAVMLFALIPITTI) traverse the membrane as a helical segment. At 398 to 412 (RSAMSKLIKGSSYGK) the chain is on the cytoplasmic side. The chain crosses the membrane as a helical span at residues 413–433 (VFVILQLSLTLTGVVTSTVYN). Over 434 to 446 (KIYQVTMEKFIGT) the chain is Extracellular. A helical transmembrane segment spans residues 447–467 (CFALSSFLSFLAIIPIGIVAY). The Cytoplasmic segment spans residues 468–481 (KQASWLQYGDVRET).

It belongs to the major facilitator superfamily. SLC46A family. In terms of processing, glycosylated. Highly expressed by the epididymal duct epithelium.

The protein localises to the endosome membrane. It localises to the cell membrane. It catalyses the reaction N-acetyl-beta-D-glucosaminyl-(1-&gt;4)-1,6-anhydro-N-acetyl-beta-D-muramoyl-L-alanyl-gamma-D-glutamyl-meso-2,6-diaminopimeloyl-D-alanine(out) + n H(+)(out) = N-acetyl-beta-D-glucosaminyl-(1-&gt;4)-1,6-anhydro-N-acetyl-beta-D-muramoyl-L-alanyl-gamma-D-glutamyl-meso-2,6-diaminopimeloyl-D-alanine(in) + n H(+)(in). The catalysed reaction is L-alanyl-gamma-D-glutamyl-meso-2,6-diaminopimelate(out) + n H(+)(out) = L-alanyl-gamma-D-glutamyl-meso-2,6-diaminopimelate(in) + n H(+)(in). The enzyme catalyses N-acetyl-D-muramoyl-L-alanyl-D-isoglutamine(out) + n H(+)(out) = N-acetyl-D-muramoyl-L-alanyl-D-isoglutamine(in) + n H(+)(in). It carries out the reaction 2',3'-cGAMP(out) + n H(+)(out) = 2',3'-cGAMP(in) + n H(+)(in). It catalyses the reaction 3',3'-cGAMP(out) + n H(+)(out) = 3',3'-cGAMP(in) + n H(+)(in). Proton-coupled transporter that delivers pathogen-associated or danger-associated molecular patterns to cytosolic pattern recognition receptors as part of the innate immune response to microbes or tissue injury. Has selectivity toward muropeptides that contain the amino acid diaminopimelic acid (DAP-type peptidoglycan muropeptides) including Tri-DAP and tracheal toxin (TCT), common in Gram-negative bacteria and Gram-positive bacilli. In the context of immune recognition of skin microbiota, shuttles bacterial muropeptides across the endolysosomal membranes into the cytosol for recognition by NOD1, triggering MYD88-dependent secretion of IL1A and neutrophil recruitment in a pyroptosis-type inflammatory process. To a lesser extent and redundantly, transports muramyl dipeptides derived from most bacterial proteoglycans, eliciting NOD2 receptor activation and downstream inflammatory responses. Postulated to function as an importer of cyclic GMP-AMP dinucleotides (cGAMPs) in monocyte and macrophage cell lineages. Selectively imports cGAMPs derived from pathogenic bacteria such as 3'3'-cGAMP thus providing for differential immune recognition of pathogenic versus commensal bacteria. During tumorigenesis may transport extracellular tumor-derived 2'3'-cGAMP across the plasma membrane of M1-polarized macrophages to activate the anti-tumoral stimulator of interferon genes (STING) pathway. The transport mechanism, its electrogenicity and stoichiometry remain to be elucidated. The protein is Solute carrier family 46 member 2 of Canis lupus familiaris (Dog).